The primary structure comprises 207 residues: Prolactin (207 aa).

An N-terminal signal peptide occupies residues 1-20 (KSRLYFAVTVLMCAFVSING). 2 disulfide bridges follow: Cys-66-Cys-180 and Cys-197-Cys-207.

The protein belongs to the somatotropin/prolactin family. Pituitary gland.

It localises to the secreted. The polypeptide is Prolactin (prl) (Hypophthalmichthys molitrix (Silver carp)).